We begin with the raw amino-acid sequence, 223 residues long: Large ribosomal subunit protein uL4 (223 aa).

The interval 47–72 (GTASTKTRGEVAGGGRKPWPQKHTGR) is disordered.

It belongs to the universal ribosomal protein uL4 family. In terms of assembly, part of the 50S ribosomal subunit.

In terms of biological role, one of the primary rRNA binding proteins, this protein initially binds near the 5'-end of the 23S rRNA. It is important during the early stages of 50S assembly. It makes multiple contacts with different domains of the 23S rRNA in the assembled 50S subunit and ribosome. Forms part of the polypeptide exit tunnel. The sequence is that of Large ribosomal subunit protein uL4 from Fervidobacterium nodosum (strain ATCC 35602 / DSM 5306 / Rt17-B1).